Reading from the N-terminus, the 330-residue chain is Zinc finger protein Gfi-1b (330 aa).

Residues M1–A20 are SNAG domain. 2 disordered regions span residues M1–Q21 and M75–P99. An N6,N6-dimethyllysine modification is found at K8. The interaction with ARIH2 stretch occupies residues G91–K330. C2H2-type zinc fingers lie at residues Y163 to H186, F192 to H214, F220 to H242, Y248 to H270, H276 to H298, and F304 to H327. Residues H164–K330 are mediates interaction with GATA1.

Interacts with histone methyltransferases EHMT2 and SUV39H1. Interacts with ARIH2 (via RING-type 2) and with RUNX1T1. Forms a complex with GATA1. Component of a RCOR-GFI-KDM1A-HDAC complex. Interacts directly with RCOR1, KDM1A and HDAC2. Post-translationally, methylation at Lys-8 in the SNAG domain seems required for the recruitment of the corepressor complex. In terms of tissue distribution, expressed in bone marrow and in spleen. Detected in hematopoietic stem cells, erythroblasts, and megakaryocytes. Expressed in thymocytes.

Its subcellular location is the nucleus. In terms of biological role, essential proto-oncogenic transcriptional regulator necessary for development and differentiation of erythroid and megakaryocytic lineages. Component of a RCOR-GFI-KDM1A-HDAC complex that suppresses, via histone deacetylase (HDAC) recruitment, a number of genes implicated in multilineage blood cell development and controls hematopoietic differentiation. Transcriptional repressor or activator depending on both promoter and cell type context; represses promoter activity of SOCS1 and SOCS3 and thus, may regulate cytokine signaling pathways. Cooperates with GATA1 to repress target gene transcription, such as the apoptosis regulator BCL2L1; GFI1B silencing in leukemic cell lines markedly increase apoptosis rate. Inhibits down-regulation of MYC and MYB as well as the cyclin-dependent kinase inhibitor CDKN1A/P21WAF1 in IL6-treated myelomonocytic cells. Represses expression of GATA3 in T-cell lymphomas and inhibits GATA1-mediated transcription; as GATA1 also mediates erythroid GFI1B transcription, both GATA1 and GFI1B participate in a feedback regulatory pathway controlling the expression of GFI1B gene in erythroid cells. Suppresses GATA1-mediated stimulation of GFI1B promoter through protein interaction. Binds to gamma-satellite DNA and to its own promoter, auto-repressing its own expression. Alters histone methylation by recruiting histone methyltransferase to target genes promoters. Plays a role in heterochromatin formation. The polypeptide is Zinc finger protein Gfi-1b (Gfi1b) (Mus musculus (Mouse)).